The primary structure comprises 382 residues: Homoserine O-acetyltransferase (382 aa).

The AB hydrolase-1 domain occupies 50 to 360 (NAVLICHALT…DKGHDAFLLD (311 aa)). Ser155 (nucleophile) is an active-site residue. Residue Arg225 participates in substrate binding. Residues Asp321 and His354 contribute to the active site. Asp355 is a binding site for substrate.

This sequence belongs to the AB hydrolase superfamily. MetX family. As to quaternary structure, homodimer.

The protein resides in the cytoplasm. It carries out the reaction L-homoserine + acetyl-CoA = O-acetyl-L-homoserine + CoA. The protein operates within amino-acid biosynthesis; L-methionine biosynthesis via de novo pathway; O-acetyl-L-homoserine from L-homoserine: step 1/1. Transfers an acetyl group from acetyl-CoA to L-homoserine, forming acetyl-L-homoserine. The polypeptide is Homoserine O-acetyltransferase (Caulobacter vibrioides (strain ATCC 19089 / CIP 103742 / CB 15) (Caulobacter crescentus)).